A 547-amino-acid chain; its full sequence is Solute carrier family 22 member 7 (547 aa).

The chain crosses the membrane as a helical span at residues 21 to 41; the sequence is VALLALPRVLLPMHFLLPIFL. Polar residues predominate over residues 91–103; sequence NSTLWGEGQNSGE. Residues 91–112 are disordered; it reads NSTLWGEGQNSGEQPEGEPSTV. 11 helical membrane-spanning segments follow: residues 145–165, 179–199, 203–223, 233–253, 258–278, 345–365, 367–387, 403–423, 431–451, 465–485, and 492–512; these read AIST…GYLS, VSSL…MFAI, LTGM…LEWL, VLSS…GYLI, WLLL…WWVP, ISLC…GVSL, LSGL…VELP, LTMA…ILVS, TALA…AYLF, MGLT…AALL, and LPKL…LLLP. The interval 521-547 is disordered; sequence ETIQDVERKSAPSSLQEEEMPMKQVQD.

Belongs to the major facilitator (TC 2.A.1) superfamily. Organic cation transporter (TC 2.A.1.19) family.

The protein localises to the basolateral cell membrane. It is found in the apical cell membrane. It localises to the cell membrane. It catalyses the reaction orotate(out) + L-glutamate(in) = orotate(in) + L-glutamate(out). It carries out the reaction 3',5'-cyclic GMP(in) = 3',5'-cyclic GMP(out). The catalysed reaction is GMP(in) = GMP(out). The enzyme catalyses 2'-deoxyguanosine(in) = 2'-deoxyguanosine(out). It catalyses the reaction GDP(in) = GDP(out). It carries out the reaction guanosine(in) = guanosine(out). The catalysed reaction is GTP(in) = GTP(out). The enzyme catalyses 3',5'-cyclic AMP(in) = 3',5'-cyclic AMP(out). It catalyses the reaction creatinine(in) = creatinine(out). It carries out the reaction prostaglandin E2(out) = prostaglandin E2(in). The catalysed reaction is 2-oxoglutarate(in) = 2-oxoglutarate(out). The enzyme catalyses glutarate(in) = glutarate(out). It catalyses the reaction urate(out) = urate(in). It carries out the reaction estrone 3-sulfate(out) = estrone 3-sulfate(in). Its function is as follows. Functions as a Na(+)-independent bidirectional multispecific transporter. Contributes to the renal and hepatic elimination of endogenous organic compounds from the systemic circulation into the urine and bile, respectively. Capable of transporting a wide range of purine and pyrimidine nucleobases, nucleosides and nucleotides, with cGMP, 2'deoxyguanosine and GMP being the preferred substrates. Functions as a pH- and chloride-independent cGMP bidirectional facilitative transporter that can regulate both intracellular and extracellular levels of cGMP and may be involved in cGMP signaling pathways. Mediates orotate/glutamate bidirectional exchange and most likely display a physiological role in hepatic release of glutamate into the blood. Involved in renal secretion and possible reabsorption of creatinine. Able to uptake prostaglandin E2 (PGE2) and may contribute to PGE2 renal excretion. Also transports alpha-ketoglutarate and urate. Apart from the orotate/glutamate exchange, the counterions for the uptake of other SLC22A7/OAT2 substrates remain to be identified. The protein is Solute carrier family 22 member 7 (SLC22A7) of Bos taurus (Bovine).